Here is a 388-residue protein sequence, read N- to C-terminus: MNLHEYQGKQLFAEYGLPVSKGFAVDTPEAAAEACDKIGGSEWVVKAQVHAGGRGKAGGVKLVRSKEDAKAFAAQWLGKRLVTYQTDANGQPVTKILVESCTDIAKELYLGAVVDRSSRRIVFMASTEGGVDIEKVAHETPEKIIKATIDPLVGAQPFQGRELAFQLGLEGKQVAQFAKIFVGLAKLFKEHDLALLEVNPLVIKADGDLHCLDAKINIDANAMYRQPKLKTFHDPSQDDPREAHAASFELNYVALEGNIGCMVNGAGLAMGTMDIVNLHGGKPANFLDVGGGATKERVTEAFKIILSDSNVAAVLVNIFGGIVRCDMIAEGIIGAVKEVGVKVPVVVRLEGNNAELGAKVLAESGLNIIAATSLTDAAQQVVKAAEGK.

Residues 9–244 enclose the ATP-grasp domain; that stretch reads KQLFAEYGLP…PSQDDPREAH (236 aa). ATP contacts are provided by residues Lys-46, 53-55, Glu-99, Thr-102, and Glu-107; that span reads GRG. Residues Asn-199 and Asp-213 each coordinate Mg(2+). Substrate-binding positions include Asn-264 and 321–323; that span reads GIV.

This sequence belongs to the succinate/malate CoA ligase beta subunit family. Heterotetramer of two alpha and two beta subunits. It depends on Mg(2+) as a cofactor.

The enzyme catalyses succinate + ATP + CoA = succinyl-CoA + ADP + phosphate. The catalysed reaction is GTP + succinate + CoA = succinyl-CoA + GDP + phosphate. It functions in the pathway carbohydrate metabolism; tricarboxylic acid cycle; succinate from succinyl-CoA (ligase route): step 1/1. Succinyl-CoA synthetase functions in the citric acid cycle (TCA), coupling the hydrolysis of succinyl-CoA to the synthesis of either ATP or GTP and thus represents the only step of substrate-level phosphorylation in the TCA. The beta subunit provides nucleotide specificity of the enzyme and binds the substrate succinate, while the binding sites for coenzyme A and phosphate are found in the alpha subunit. This chain is Succinate--CoA ligase [ADP-forming] subunit beta, found in Pseudomonas putida (strain GB-1).